The primary structure comprises 236 residues: MPTILVINPNSSTFITTSMEEKLVPLVPSDVKLRFLTCPQPGAAVIDSITEATLTAALVFQALTPSVLDGVDAIAVACYSPTPLVDMIRESFALPCMGIVQASVLSALSVGQRIGILTSTYRSECLLYELLDSFGVSRTRVAAIASTGRTVLQLSQMPSQERETLLVQKAQELANTKGADVICLGGAALAAIRDQIQVAVGPNIPIIDGVHAAVELLAGLARQNLHTSKFGIYTYP.

Belongs to the HyuE racemase family.

Its subcellular location is the cytoplasm. This is an uncharacterized protein from Schizosaccharomyces pombe (strain 972 / ATCC 24843) (Fission yeast).